The sequence spans 426 residues: Formyl-CoA:oxalate CoA-transferase (426 aa).

CoA-binding positions include 17 to 18 (QS), R38, 72 to 75 (LDTK), 96 to 98 (NFG), R104, and 136 to 139 (KVYE). The active-site Nucleophile is D168. Residue 247-249 (GGQ) coordinates substrate.

Belongs to the CoA-transferase III family. Frc subfamily. Homodimer.

The catalysed reaction is formyl-CoA + oxalate = oxalyl-CoA + formate. It participates in metabolic intermediate degradation; oxalate degradation; CO(2) and formate from oxalate: step 1/2. Its function is as follows. Involved in the catabolism of oxalate and in the adapatation to low pH via the induction of the oxalate-dependent acid tolerance response (ATR). Catalyzes the transfer of the CoA moiety from formyl-CoA to oxalate. The chain is Formyl-CoA:oxalate CoA-transferase from Rhodopseudomonas palustris (strain BisB18).